Here is a 371-residue protein sequence, read N- to C-terminus: Chaperone protein DnaJ (371 aa).

The 65-residue stretch at 5-69 (DYYEVLGLSK…QKRAQYDQFG (65 aa)) folds into the J domain. The CR-type zinc-finger motif lies at 133-215 (GKELNVEIPV…CHGSSKVRKR (83 aa)). 8 residues coordinate Zn(2+): Cys-146, Cys-149, Cys-163, Cys-166, Cys-189, Cys-192, Cys-203, and Cys-206. 4 CXXCXGXG motif repeats span residues 146–153 (CDTCKGSG), 163–170 (CKHCSGSG), 189–196 (CGHCSGTG), and 203–210 (CTTCHGSS).

The protein belongs to the DnaJ family. Homodimer. It depends on Zn(2+) as a cofactor.

The protein localises to the cytoplasm. Its function is as follows. Participates actively in the response to hyperosmotic and heat shock by preventing the aggregation of stress-denatured proteins and by disaggregating proteins, also in an autonomous, DnaK-independent fashion. Unfolded proteins bind initially to DnaJ; upon interaction with the DnaJ-bound protein, DnaK hydrolyzes its bound ATP, resulting in the formation of a stable complex. GrpE releases ADP from DnaK; ATP binding to DnaK triggers the release of the substrate protein, thus completing the reaction cycle. Several rounds of ATP-dependent interactions between DnaJ, DnaK and GrpE are required for fully efficient folding. Also involved, together with DnaK and GrpE, in the DNA replication of plasmids through activation of initiation proteins. The chain is Chaperone protein DnaJ from Bacillus cereus (strain ATCC 14579 / DSM 31 / CCUG 7414 / JCM 2152 / NBRC 15305 / NCIMB 9373 / NCTC 2599 / NRRL B-3711).